Reading from the N-terminus, the 188-residue chain is NADH-quinone oxidoreductase subunit I 2 (188 aa).

4Fe-4S ferredoxin-type domains are found at residues 56–88 (HFLK…VVPY) and 98–127 (AKFE…LGQQ). Cys68, Cys71, Cys74, Cys78, Cys107, Cys110, Cys113, and Cys117 together coordinate [4Fe-4S] cluster.

The protein belongs to the complex I 23 kDa subunit family. NDH-1 is composed of 14 different subunits. Subunits NuoA, H, J, K, L, M, N constitute the membrane sector of the complex. The cofactor is [4Fe-4S] cluster.

It is found in the cell inner membrane. It carries out the reaction a quinone + NADH + 5 H(+)(in) = a quinol + NAD(+) + 4 H(+)(out). In terms of biological role, NDH-1 shuttles electrons from NADH, via FMN and iron-sulfur (Fe-S) centers, to quinones in the respiratory chain. The immediate electron acceptor for the enzyme in this species is believed to be ubiquinone. Couples the redox reaction to proton translocation (for every two electrons transferred, four hydrogen ions are translocated across the cytoplasmic membrane), and thus conserves the redox energy in a proton gradient. This is NADH-quinone oxidoreductase subunit I 2 from Rhizobium meliloti (strain 1021) (Ensifer meliloti).